We begin with the raw amino-acid sequence, 65 residues long: MSEEKFDAKVDKVSGSVKESVGKLTGDKEVESEGKVDKLKGHAKEKLADIKDTIKGASESFKKKD.

Positions 1-12 (MSEEKFDAKVDK) are enriched in basic and acidic residues. The segment at 1 to 29 (MSEEKFDAKVDKVSGSVKESVGKLTGDKE) is disordered.

This sequence belongs to the UPF0337 (CsbD) family.

In Streptococcus agalactiae serotype III (strain NEM316), this protein is UPF0337 protein gbs1203.